The primary structure comprises 207 residues: Ribonuclease HII (207 aa).

Residues 18–206 (EFIVGVDEVG…VKNILQLLEK (189 aa)) form the RNase H type-2 domain. Positions 24, 25, and 115 each coordinate a divalent metal cation.

It belongs to the RNase HII family. Requires Mn(2+) as cofactor. It depends on Mg(2+) as a cofactor.

It is found in the cytoplasm. The catalysed reaction is Endonucleolytic cleavage to 5'-phosphomonoester.. In terms of biological role, endonuclease that specifically degrades the RNA of RNA-DNA hybrids. In Hydrogenovibrio crunogenus (strain DSM 25203 / XCL-2) (Thiomicrospira crunogena), this protein is Ribonuclease HII.